The following is a 574-amino-acid chain: Cytochrome P450 4g15 (574 aa).

The interval 288 to 327 is disordered; sequence REREQNGGVDQTPSTAGSDEKDREKDKEKASPVAGLSYGQ. The span at 295–304 shows a compositional bias: polar residues; that stretch reads GVDQTPSTAG. Residues 305-317 are compositionally biased toward basic and acidic residues; it reads SDEKDREKDKEKA. The heme site is built by Glu379 and Cys519.

It belongs to the cytochrome P450 family. Requires heme as cofactor. As to expression, expressed in larval brain cortex cells and ring glands and weakly in larval digestive system and adult nervous system.

The protein localises to the endoplasmic reticulum membrane. It is found in the microsome membrane. Probably involved in steroid hormones biosynthesis. The sequence is that of Cytochrome P450 4g15 (Cyp4g15) from Drosophila melanogaster (Fruit fly).